Reading from the N-terminus, the 163-residue chain is Nucleotide-binding protein ECA1137 (163 aa).

The protein belongs to the YajQ family.

Nucleotide-binding protein. The chain is Nucleotide-binding protein ECA1137 from Pectobacterium atrosepticum (strain SCRI 1043 / ATCC BAA-672) (Erwinia carotovora subsp. atroseptica).